Consider the following 119-residue polypeptide: MSNDKKNAFPIKLTHSAADQVKKLISSQDYAEKLDLKLRVYILGGGCGGFQYKFILDDQVSNDDCVIESNGAIVVVDPMSLQYLFGGIIDYYEGLEGSKFLVVNPNAKGVCSCGSSFNI.

Residues C47, C111, and C113 each coordinate iron-sulfur cluster.

The protein belongs to the HesB/IscA family. In terms of assembly, homodimer. The cofactor is iron-sulfur cluster.

Required for insertion of 4Fe-4S clusters for at least IspG. This is Iron-sulfur cluster insertion protein ErpA from Blochmanniella floridana.